The sequence spans 195 residues: NAD(P)H-quinone oxidoreductase subunit J, chloroplastic (195 aa).

Belongs to the complex I 30 kDa subunit family. NDH is composed of at least 16 different subunits, 5 of which are encoded in the nucleus.

It localises to the plastid. The protein resides in the chloroplast thylakoid membrane. The catalysed reaction is a plastoquinone + NADH + (n+1) H(+)(in) = a plastoquinol + NAD(+) + n H(+)(out). It carries out the reaction a plastoquinone + NADPH + (n+1) H(+)(in) = a plastoquinol + NADP(+) + n H(+)(out). Its function is as follows. NDH shuttles electrons from NAD(P)H:plastoquinone, via FMN and iron-sulfur (Fe-S) centers, to quinones in the photosynthetic chain and possibly in a chloroplast respiratory chain. The immediate electron acceptor for the enzyme in this species is believed to be plastoquinone. Couples the redox reaction to proton translocation, and thus conserves the redox energy in a proton gradient. The protein is NAD(P)H-quinone oxidoreductase subunit J, chloroplastic of Chlorokybus atmophyticus (Soil alga).